Consider the following 35-residue polypeptide: ISCQDVKQSLAPCLPYVTGRAPKPAPGCCNGINHL.

A disulfide bridge links C13 with C28.

In terms of tissue distribution, seeds.

Plant non-specific lipid-transfer proteins transfer phospholipids as well as galactolipids across membranes. May play a role in wax or cutin deposition in the cell walls of expanding epidermal cells and certain secretory tissues. Inhibits the growth of F.oxysporum and P.infestans. The polypeptide is Non-specific lipid-transfer protein 1 (Nigella sativa (Black cumin)).